Consider the following 141-residue polypeptide: Small ribosomal subunit protein bS16 (141 aa).

The interval 84 to 141 is disordered; that stretch reads TRKARSNPEKSKPKAKAQERLEAARMAEEEAAAAAKAAAEAPAEEAPAAEAPAEEAQA. Positions 89–111 are enriched in basic and acidic residues; that stretch reads SNPEKSKPKAKAQERLEAARMAE. Residues 115–141 are compositionally biased toward low complexity; the sequence is AAAAKAAAEAPAEEAPAAEAPAEEAQA.

It belongs to the bacterial ribosomal protein bS16 family.

The chain is Small ribosomal subunit protein bS16 from Parvibaculum lavamentivorans (strain DS-1 / DSM 13023 / NCIMB 13966).